We begin with the raw amino-acid sequence, 359 residues long: Decorin (359 aa).

The signal sequence occupies residues 1–16; that stretch reads MKATIILLLLAQVSWA. Positions 17–30 are excised as a propeptide; sequence GPFQQRGLFDFMLE. An O-linked (Xyl...) (glycosaminoglycan) serine glycan is attached at serine 34. 2 disulfides stabilise this stretch: cysteine 54-cysteine 60 and cysteine 58-cysteine 67. LRR repeat units lie at residues 73 to 93, 94 to 117, 118 to 141, 142 to 162, 163 to 186, 187 to 212, 213 to 233, 234 to 257, 258 to 281, 282 to 304, 305 to 334, and 335 to 359; these read DKVP…NNKI, TEIK…NNKI, SKVS…KNQL, KELP…ENEI, TKVR…TNPL, KSSG…DTNI, TSIP…GNKI, SRVD…FNSI, SAVD…NNKL, TRVP…NNNI, SVVG…SNPV, and QYWE…GNYK. Asparagine 211 carries N-linked (GlcNAc...) asparagine glycosylation. N-linked (GlcNAc...) asparagine glycans are attached at residues asparagine 262 and asparagine 303. Cysteine 313 and cysteine 346 are disulfide-bonded.

It belongs to the small leucine-rich proteoglycan (SLRP) family. SLRP class I subfamily. As to quaternary structure, binds to type I and type II collagen, fibronectin and TGF-beta. Forms a ternary complex with MFAP2 and ELN. Interacts with DPT. Post-translationally, the attached glycosaminoglycan chain can be either chondroitin sulfate or dermatan sulfate depending upon the tissue of origin. As to expression, detected in placenta (at protein level). Detected in cerebrospinal fluid, fibroblasts and urine (at protein level).

It localises to the secreted. Its subcellular location is the extracellular space. It is found in the extracellular matrix. In terms of biological role, may affect the rate of fibrils formation. The protein is Decorin (DCN) of Homo sapiens (Human).